The following is a 194-amino-acid chain: MEALKRKIEEEGVVLSDQVLKVDSFLNHQIDPLLMQRIGDEFASRFAKDGITKIVTIESSGIAPAVMTGLKLGVPVVFARKHKSLTLTDNLLTASVYSFTKQTESQIAVSGTHLSDQDHVLIIDDFLANGQAAHGLVSIVKQAGASIAGIGIVIEKSFQPGRDELVKLGYRVESLARIQSLEEGKVSFVQEVHS.

Xanthine is bound by residues leucine 20 and asparagine 27. 128-132 (ANGQA) lines the 5-phospho-alpha-D-ribose 1-diphosphate pocket. A xanthine-binding site is contributed by lysine 156.

This sequence belongs to the purine/pyrimidine phosphoribosyltransferase family. Xpt subfamily. In terms of assembly, homodimer.

It is found in the cytoplasm. The catalysed reaction is XMP + diphosphate = xanthine + 5-phospho-alpha-D-ribose 1-diphosphate. Its pathway is purine metabolism; XMP biosynthesis via salvage pathway; XMP from xanthine: step 1/1. Functionally, converts the preformed base xanthine, a product of nucleic acid breakdown, to xanthosine 5'-monophosphate (XMP), so that it can be reused for RNA or DNA synthesis. This Bacillus subtilis (strain 168) protein is Xanthine phosphoribosyltransferase (xpt).